Reading from the N-terminus, the 117-residue chain is DNA-binding protein RdgB (117 aa).

Positions 82–102 (NHSALAKKYNVSLQWIYKIVR) form a DNA-binding region, H-T-H motif.

This sequence belongs to the c/mor transcriptional regulatory family.

Regulates pectin lyase production in response to DNA damage. The chain is DNA-binding protein RdgB (rdgB) from Pectobacterium carotovorum subsp. carotovorum (Erwinia carotovora subsp. carotovora).